A 291-amino-acid polypeptide reads, in one-letter code: MSIQRLGYLGFEVADVRSWRTFATTRLGMMEASASETEATFRIDSRAWRLSVSRGPADDYLFAGFEVDSEQGLQEVKESLQAHGVTVKVEGGELIAKRGVLGLISCTDPFGNRVEIYYGATELFERPFASPTGVSGFQTGDQGLGHYVLSVADVDAALAFYTKALGFQLADVIDWTIGDGLSVTLYFLYCNGRHHSFAFAKLPGSKRLHHFMLQANGMDDVGLAYDKFDAERAVVMSLGRHTNDHMISFYGATPSGFAVEYGWGAREVTRHWSVVRYDRISIWGHKFQAPA.

2 VOC domains span residues 5–119 (RLGY…IYYG) and 143–264 (GLGH…YGWG). Positions 146, 210, and 260 each coordinate Fe cation.

It belongs to the extradiol ring-cleavage dioxygenase family. As to quaternary structure, homooctamer. Fe(2+) is required as a cofactor.

The enzyme catalyses 3-methylcatechol + O2 = 2-hydroxy-6-oxo-2,4-heptadienoate + H(+). Its pathway is xenobiotic degradation; toluene degradation. This chain is 3-methylcatechol 2,3-dioxygenase (todE), found in Pseudomonas putida (strain ATCC 700007 / DSM 6899 / JCM 31910 / BCRC 17059 / LMG 24140 / F1).